The primary structure comprises 645 residues: 1,4-alpha-glucan branching enzyme GlgB (645 aa).

The active-site Nucleophile is the Asp-309. The active-site Proton donor is the Glu-352. The interval 619-645 (VKTRKGSKKQDGSKTKVRSNVTSRGKR) is disordered. Positions 636-645 (RSNVTSRGKR) are enriched in polar residues.

The protein belongs to the glycosyl hydrolase 13 family. GlgB subfamily. Monomer.

It catalyses the reaction Transfers a segment of a (1-&gt;4)-alpha-D-glucan chain to a primary hydroxy group in a similar glucan chain.. The protein operates within glycan biosynthesis; glycogen biosynthesis. Its function is as follows. Catalyzes the formation of the alpha-1,6-glucosidic linkages in glycogen by scission of a 1,4-alpha-linked oligosaccharide from growing alpha-1,4-glucan chains and the subsequent attachment of the oligosaccharide to the alpha-1,6 position. The protein is 1,4-alpha-glucan branching enzyme GlgB of Bacillus cereus (strain AH187).